A 242-amino-acid polypeptide reads, in one-letter code: Phosphatidylethanolamine-binding protein 4 (242 aa).

The signal sequence occupies residues 1–26 (MTMKLVAAALCLSLLAAGLWVGLSLT). The interval 31–50 (EEGKPGGEKPGGGKPGGSGR) is disordered. The segment covering 38 to 50 (EKPGGGKPGGSGR) has biased composition (gly residues). Residues N77 and N139 are each glycosylated (N-linked (GlcNAc...) asparagine). Residues 210 to 242 (DPDTSTQFMTQFDEELSSEFGRINDDQEQFNQK) are important for secretion.

This sequence belongs to the phosphatidylethanolamine-binding protein family.

The protein localises to the secreted. Functionally, promotes AKT phosphorylation, suggesting a possible role in the PI3K-AKT signaling pathway. This chain is Phosphatidylethanolamine-binding protein 4 (Pebp4), found in Mus musculus (Mouse).